We begin with the raw amino-acid sequence, 192 residues long: UPF0301 protein BceJ2315_30870 (192 aa).

It belongs to the UPF0301 (AlgH) family.

This is UPF0301 protein BceJ2315_30870 from Burkholderia cenocepacia (strain ATCC BAA-245 / DSM 16553 / LMG 16656 / NCTC 13227 / J2315 / CF5610) (Burkholderia cepacia (strain J2315)).